Consider the following 431-residue polypeptide: Enolase (431 aa).

Gln-167 provides a ligand contact to (2R)-2-phosphoglycerate. The active-site Proton donor is the Glu-209. 3 residues coordinate Mg(2+): Asp-246, Glu-289, and Asp-316. (2R)-2-phosphoglycerate is bound by residues Lys-341, Arg-370, Ser-371, and Lys-392. Catalysis depends on Lys-341, which acts as the Proton acceptor.

This sequence belongs to the enolase family. As to quaternary structure, component of the RNA degradosome, a multiprotein complex involved in RNA processing and mRNA degradation. It depends on Mg(2+) as a cofactor.

The protein localises to the cytoplasm. Its subcellular location is the secreted. It localises to the cell surface. It carries out the reaction (2R)-2-phosphoglycerate = phosphoenolpyruvate + H2O. It functions in the pathway carbohydrate degradation; glycolysis; pyruvate from D-glyceraldehyde 3-phosphate: step 4/5. In terms of biological role, catalyzes the reversible conversion of 2-phosphoglycerate (2-PG) into phosphoenolpyruvate (PEP). It is essential for the degradation of carbohydrates via glycolysis. This Shewanella loihica (strain ATCC BAA-1088 / PV-4) protein is Enolase.